We begin with the raw amino-acid sequence, 65 residues long: Small ribosomal subunit protein eS31 (65 aa).

Zn(2+) contacts are provided by Cys-36, Cys-39, Cys-55, and Cys-58. The C4-type zinc-finger motif lies at 36–58 (CPKCGSVMAFHKEPVPRWHCGKC).

This sequence belongs to the eukaryotic ribosomal protein eS31 family. Part of the 30S ribosomal subunit. It depends on Zn(2+) as a cofactor.

This chain is Small ribosomal subunit protein eS31, found in Pyrobaculum aerophilum (strain ATCC 51768 / DSM 7523 / JCM 9630 / CIP 104966 / NBRC 100827 / IM2).